The sequence spans 332 residues: Probable isoaspartyl peptidase/L-asparaginase CG7860 (332 aa).

Threonine 188 functions as the Nucleophile in the catalytic mechanism. Residues 216 to 219 (RIGD) and 239 to 242 (TGHG) each bind substrate.

This sequence belongs to the Ntn-hydrolase family. Heterodimer of an alpha and beta chain produced by autocleavage. Post-translationally, cleaved into an alpha and beta chain by autocatalysis; this activates the enzyme. The N-terminal residue of the beta subunit is responsible for the nucleophile hydrolase activity.

It catalyses the reaction L-asparagine + H2O = L-aspartate + NH4(+). The catalysed reaction is Cleavage of a beta-linked Asp residue from the N-terminus of a polypeptide.. Functionally, has both L-asparaginase and beta-aspartyl peptidase activity. Does not have aspartylglucosaminidase activity and is inactive toward GlcNAc-L-Asn. Likewise, has no activity toward glutamine. The sequence is that of Probable isoaspartyl peptidase/L-asparaginase CG7860 from Drosophila melanogaster (Fruit fly).